Consider the following 66-residue polypeptide: Probable Sec-independent protein translocase protein TatE (66 aa).

A helical membrane pass occupies residues 1–21; it reads MEGISITKLLVIAVLIVLLFG. Positions 46–66 are disordered; that stretch reads ETPAAKKSDGAEAAPRVENKE.

The protein belongs to the TatA/E family. TatE subfamily.

The protein localises to the cell inner membrane. Functionally, part of the twin-arginine translocation (Tat) system that transports large folded proteins containing a characteristic twin-arginine motif in their signal peptide across membranes. TatE shares overlapping functions with TatA. This chain is Probable Sec-independent protein translocase protein TatE, found in Edwardsiella piscicida.